Reading from the N-terminus, the 270-residue chain is Putative phosphoenolpyruvate synthase regulatory protein (270 aa).

ADP is bound at residue 154 to 161 (GVSRAGKT).

The protein belongs to the pyruvate, phosphate/water dikinase regulatory protein family. PSRP subfamily.

It carries out the reaction [pyruvate, water dikinase] + ADP = [pyruvate, water dikinase]-phosphate + AMP + H(+). It catalyses the reaction [pyruvate, water dikinase]-phosphate + phosphate + H(+) = [pyruvate, water dikinase] + diphosphate. Bifunctional serine/threonine kinase and phosphorylase involved in the regulation of the phosphoenolpyruvate synthase (PEPS) by catalyzing its phosphorylation/dephosphorylation. In Deinococcus geothermalis (strain DSM 11300 / CIP 105573 / AG-3a), this protein is Putative phosphoenolpyruvate synthase regulatory protein.